A 353-amino-acid chain; its full sequence is Phosphate acyltransferase (353 aa).

The protein belongs to the PlsX family. In terms of assembly, homodimer. Probably interacts with PlsY.

It localises to the cytoplasm. The catalysed reaction is a fatty acyl-[ACP] + phosphate = an acyl phosphate + holo-[ACP]. It functions in the pathway lipid metabolism; phospholipid metabolism. In terms of biological role, catalyzes the reversible formation of acyl-phosphate (acyl-PO(4)) from acyl-[acyl-carrier-protein] (acyl-ACP). This enzyme utilizes acyl-ACP as fatty acyl donor, but not acyl-CoA. This is Phosphate acyltransferase from Syntrophobacter fumaroxidans (strain DSM 10017 / MPOB).